We begin with the raw amino-acid sequence, 350 residues long: Renin receptor (350 aa).

A signal peptide spans 1 to 16 (MAVFVVLLALVAGVLG). Residues 17 to 302 (NEFSILKSPG…YNLAYKYNFE (286 aa)) are Extracellular-facing. The helical transmembrane segment at 303 to 323 (YSVVFNMVLWIMIALALAVII) threads the bilayer. The Cytoplasmic segment spans residues 324–350 (TSYNIWNMDPGYDSIIYRMTNQKIRMD). Residues 346–350 (KIRMD) carry the Mediates retrograde transport to the ER motif.

Interacts with renin. Accessory component of the multisubunit proton-transporting vacuolar (V)-ATPase protein pump. Interacts (via N-terminus) with ATP6AP1 (via N-terminus). Interacts with ATP6V0D1; ATP6V0D1 is a V-ATPase complex subunit and the interaction promotes V-ATPase complex assembly. Interacts with TMEM9; TMEM9 is a V-ATPase assembly regulator and the interaction induces the interaction with ATP6V0D1. Interacts with VMA21 (via N-terminus); VMA21 is a V-ATPase accessory component. In terms of processing, phosphorylated. Post-translationally, proteolytically cleaved by a furin-like convertase in the trans-Golgi network to generate N- and C-terminal fragments. As to expression, expressed in brain, heart, placenta, liver, kidney and pancreas. Barely detectable in lung and skeletal muscles. In the kidney cortex it is restricted to the mesangium of glomeruli. In the coronary and kidney artery it is expressed in the subendothelium, associated to smooth muscles where it colocalizes with REN. Expressed in vascular structures and by syncytiotrophoblast cells in the mature fetal placenta.

Its subcellular location is the endoplasmic reticulum membrane. It is found in the lysosome membrane. The protein localises to the cytoplasmic vesicle. The protein resides in the autophagosome membrane. It localises to the cell projection. Its subcellular location is the dendritic spine membrane. It is found in the axon. The protein localises to the endosome membrane. The protein resides in the clathrin-coated vesicle membrane. It localises to the secretory vesicle. Its subcellular location is the synaptic vesicle membrane. Functionally, multifunctional protein which functions as a renin, prorenin cellular receptor and is involved in the assembly of the lysosomal proton-transporting V-type ATPase (V-ATPase) and the acidification of the endo-lysosomal system. May mediate renin-dependent cellular responses by activating ERK1 and ERK2. By increasing the catalytic efficiency of renin in AGT/angiotensinogen conversion to angiotensin I, may also play a role in the renin-angiotensin system (RAS). Through its function in V-type ATPase (v-ATPase) assembly and acidification of the lysosome it regulates protein degradation and may control different signaling pathways important for proper brain development, synapse morphology and synaptic transmission. This chain is Renin receptor, found in Homo sapiens (Human).